The chain runs to 247 residues: MNVIPCSINTLKGLYDISGVEVGQHLYWQIGGLQVHAQVLITSWVVIAILLGSVTLAVRNPQTIPADGQNFFEYLLEFIRDLSKTQIGEEYGPWVPFIGTMFLFIFVSNWSGALLPWKIIQLPHGELAAPTNDINTTVALALLTSVAYFYAGLSKKGLSYFGKYIQPTPILLPINILEDFTKPLSLSFRLFGNILADELVVVVLVSLVPLVVPIPVMFLGLFTSGIQALIFATLAAAYIGESMEGHH.

The next 5 membrane-spanning stretches (helical) occupy residues 38 to 58 (QVLITSWVVIAILLGSVTLAV), 95 to 115 (VPFIGTMFLFIFVSNWSGALL), 134 to 154 (INTTVALALLTSVAYFYAGLS), 199 to 219 (LVVVVLVSLVPLVVPIPVMFL), and 220 to 240 (GLFTSGIQALIFATLAAAYIG).

This sequence belongs to the ATPase A chain family. As to quaternary structure, F-type ATPases have 2 components, CF(1) - the catalytic core - and CF(0) - the membrane proton channel. CF(1) has five subunits: alpha(3), beta(3), gamma(1), delta(1), epsilon(1). CF(0) has four main subunits: a, b, b' and c.

The protein localises to the plastid. It localises to the chloroplast thylakoid membrane. Functionally, key component of the proton channel; it plays a direct role in the translocation of protons across the membrane. This Lemna minor (Common duckweed) protein is ATP synthase subunit a, chloroplastic.